The primary structure comprises 218 residues: Adenylate kinase (218 aa).

11–16 (GAGKGT) serves as a coordination point for ATP. Residues 31-60 (STGDMFREAMANKTKVGLEAKSYIDKGNLV) form an NMP region. AMP-binding positions include T32, R37, 58–60 (NLV), 86–89 (GFPR), and Q93. Positions 127 to 165 (ARYMCKNCGATYNKISKQPKVEGTCDRCGSHEFYQREDD) are LID. R128 is a binding site for ATP. Residues C131 and C134 each coordinate Zn(2+). ATP is bound at residue 137 to 138 (TY). Zn(2+) is bound by residues C151 and C154. AMP contacts are provided by R162 and R173. Q201 is an ATP binding site.

This sequence belongs to the adenylate kinase family. In terms of assembly, monomer.

It localises to the cytoplasm. It carries out the reaction AMP + ATP = 2 ADP. It functions in the pathway purine metabolism; AMP biosynthesis via salvage pathway; AMP from ADP: step 1/1. Functionally, catalyzes the reversible transfer of the terminal phosphate group between ATP and AMP. Plays an important role in cellular energy homeostasis and in adenine nucleotide metabolism. This chain is Adenylate kinase, found in Lactobacillus acidophilus (strain ATCC 700396 / NCK56 / N2 / NCFM).